The following is a 160-amino-acid chain: Phosphopantetheine adenylyltransferase (160 aa).

The protein belongs to the eukaryotic CoaD family.

The protein localises to the cytoplasm. It catalyses the reaction (R)-4'-phosphopantetheine + ATP + H(+) = 3'-dephospho-CoA + diphosphate. It participates in cofactor biosynthesis; coenzyme A biosynthesis. Its function is as follows. Reversibly transfers an adenylyl group from ATP to 4'-phosphopantetheine, yielding dephospho-CoA (dPCoA) and pyrophosphate. The sequence is that of Phosphopantetheine adenylyltransferase from Pyrococcus furiosus (strain ATCC 43587 / DSM 3638 / JCM 8422 / Vc1).